The chain runs to 246 residues: Zinc import ATP-binding protein ZnuC (246 aa).

The ABC transporter domain maps to 24-243; that stretch reads LKIENLALAY…RTLNEIFSSY (220 aa). 56-63 serves as a coordination point for ATP; it reads GPNGGGKT.

Belongs to the ABC transporter superfamily. Zinc importer (TC 3.A.1.15.5) family. In terms of assembly, the complex is composed of two ATP-binding proteins (ZnuC), two transmembrane proteins (ZnuB) and a solute-binding protein (ZnuA).

It is found in the cell membrane. The enzyme catalyses Zn(2+)(out) + ATP(in) + H2O(in) = Zn(2+)(in) + ADP(in) + phosphate(in) + H(+)(in). Its function is as follows. Part of the ABC transporter complex ZnuABC involved in zinc import. Responsible for energy coupling to the transport system. The protein is Zinc import ATP-binding protein ZnuC of Wolbachia pipientis wMel.